The sequence spans 186 residues: Putative 5'(3')-deoxyribonucleotidase (186 aa).

The Nucleophile role is filled by Asp6. Residues Asp6, Asp8, and Asp137 each contribute to the Mg(2+) site. Residue Asp8 is the Proton donor of the active site.

It belongs to the 5'(3')-deoxyribonucleotidase family. Mg(2+) serves as cofactor.

In terms of biological role, dephosphorylates the 5' and 2'(3')-phosphates of deoxyribonucleotides. In Bordetella bronchiseptica (strain ATCC BAA-588 / NCTC 13252 / RB50) (Alcaligenes bronchisepticus), this protein is Putative 5'(3')-deoxyribonucleotidase.